The following is a 247-amino-acid chain: uncharacterized protein (247 aa).

Residues Leu-11, Asn-85, and Lys-119 each coordinate NADP(+). The active-site Proton donor is Ser-136. Tyr-150, Lys-154, Val-181, and Thr-183 together coordinate NADP(+). The Proton acceptor role is filled by Tyr-150. The active-site Lowers pKa of active site Tyr is Lys-154.

This sequence belongs to the short-chain dehydrogenases/reductases (SDR) family.

This is an uncharacterized protein from Schizosaccharomyces pombe (strain 972 / ATCC 24843) (Fission yeast).